The chain runs to 813 residues: Leucine--tRNA ligase (813 aa).

The short motif at 41 to 51 (PYPSGTLHMGH) is the 'HIGH' region element. Residues 575–579 (KMSKS) carry the 'KMSKS' region motif. Lys-578 contacts ATP.

The protein belongs to the class-I aminoacyl-tRNA synthetase family.

Its subcellular location is the cytoplasm. The enzyme catalyses tRNA(Leu) + L-leucine + ATP = L-leucyl-tRNA(Leu) + AMP + diphosphate. The protein is Leucine--tRNA ligase of Francisella tularensis subsp. tularensis (strain WY96-3418).